We begin with the raw amino-acid sequence, 211 residues long: Glutathione S-transferase class-mu 28 kDa isozyme (211 aa).

The GST N-terminal domain occupies 4–86 (DHIKVIYFNG…YMAKKHHMMG (83 aa)). Glutathione-binding residues include Tyr10, Arg16, Trp41, Lys45, Leu53, Glu70, Ser71, and Asp104. Positions 88–211 (TEEEYYNVEK…YLSDRAATPF (124 aa)) constitute a GST C-terminal domain.

This sequence belongs to the GST superfamily. Mu family. As to quaternary structure, homodimer.

It catalyses the reaction RX + glutathione = an S-substituted glutathione + a halide anion + H(+). Conjugation of reduced glutathione to a wide number of exogenous and endogenous hydrophobic electrophiles. Functionally, GST isoenzymes appear to play a central role in the parasite detoxification system. Other functions are also suspected including a role in increasing the solubility of haematin in the parasite gut. The protein is Glutathione S-transferase class-mu 28 kDa isozyme of Schistosoma haematobium (Blood fluke).